Reading from the N-terminus, the 144-residue chain is uncharacterized protein (144 aa).

The helical transmembrane segment at Leu-25–Val-47 threads the bilayer.

It localises to the membrane. This is an uncharacterized protein from Treponema pallidum (strain Nichols).